The sequence spans 533 residues: DEAD-box ATP-dependent RNA helicase CshA (533 aa).

The short motif at 2–30 (TTFRELGLSDSLLQSVESMGFEEATPIQA) is the Q motif element. The Helicase ATP-binding domain occupies 33 to 203 (IPHALQGKDI…ERFMTEPQHI (171 aa)). 46-53 (AQTGTGKT) provides a ligand contact to ATP. Residues 151 to 154 (DEAD) carry the DEAD box motif. The Helicase C-terminal domain occupies 214–374 (NIQQFYLEVQ…RMDAPTLDEA (161 aa)). The tract at residues 428–533 (TTPIALTSEP…ERKHHSRPQA (106 aa)) is disordered. Residues 458–512 (DGNRNRSRDGRGGGDGRNRDRNRDGRNRDGNRDRNRDGNRDRNRDGGSRGRRGEG) are compositionally biased toward basic and acidic residues. The segment covering 524 to 533 (ERKHHSRPQA) has biased composition (basic residues).

Belongs to the DEAD box helicase family. CshA subfamily. As to quaternary structure, oligomerizes, may be a member of the RNA degradosome.

It localises to the cytoplasm. It carries out the reaction ATP + H2O = ADP + phosphate + H(+). DEAD-box RNA helicase possibly involved in RNA degradation. May work in conjunction with the cold shock proteins to ensure proper initiation of transcription at low and optimal temperatures. Unwinds dsRNA in both 5'- and 3'-directions and shows RNA-dependent ATPase activity. Probably has a somewhat redundant function with cshB, as cshA can partially complement the growth effects of a cshB deletion. Plays a role in adaptation to cold, oxididant and pH stress. The sequence is that of DEAD-box ATP-dependent RNA helicase CshA from Bacillus cereus (strain ATCC 14579 / DSM 31 / CCUG 7414 / JCM 2152 / NBRC 15305 / NCIMB 9373 / NCTC 2599 / NRRL B-3711).